A 267-amino-acid chain; its full sequence is Ribosomal RNA small subunit methyltransferase A (267 aa).

S-adenosyl-L-methionine is bound by residues Asn-16, Leu-18, Gly-43, Glu-64, Asp-89, and Asn-110.

The protein belongs to the class I-like SAM-binding methyltransferase superfamily. rRNA adenine N(6)-methyltransferase family. RsmA subfamily.

The protein localises to the cytoplasm. It catalyses the reaction adenosine(1518)/adenosine(1519) in 16S rRNA + 4 S-adenosyl-L-methionine = N(6)-dimethyladenosine(1518)/N(6)-dimethyladenosine(1519) in 16S rRNA + 4 S-adenosyl-L-homocysteine + 4 H(+). Specifically dimethylates two adjacent adenosines (A1518 and A1519) in the loop of a conserved hairpin near the 3'-end of 16S rRNA in the 30S particle. May play a critical role in biogenesis of 30S subunits. The sequence is that of Ribosomal RNA small subunit methyltransferase A from Pseudomonas putida (strain ATCC 47054 / DSM 6125 / CFBP 8728 / NCIMB 11950 / KT2440).